A 95-amino-acid polypeptide reads, in one-letter code: TBK1 inhibitor DP96R (95 aa).

Belongs to the asfivirus DP96R family.

Its function is as follows. Inhibits cGAS-STING-mediated type I IFN expression and NF-kB activation by inhibiting TBK1 and IKBKB/IKKB. Inhibits host TBK1 phosphorylation. This is TBK1 inhibitor DP96R from Ornithodoros (relapsing fever ticks).